Here is a 288-residue protein sequence, read N- to C-terminus: Protease HtpX homolog (288 aa).

The next 2 membrane-spanning stretches (helical) occupy residues 7–27 (TAVL…MLGG) and 29–49 (QGML…YWFS). H131 contacts Zn(2+). E132 is a catalytic residue. Zn(2+) is bound at residue H135. A run of 2 helical transmembrane segments spans residues 141–161 (ILIS…ANFA) and 177–197 (IASL…QMSI). Zn(2+) is bound at residue E202.

It belongs to the peptidase M48B family. It depends on Zn(2+) as a cofactor.

It is found in the cell inner membrane. The protein is Protease HtpX homolog of Polynucleobacter necessarius subsp. necessarius (strain STIR1).